The chain runs to 106 residues: Protamine (106 aa).

The disordered stretch occupies residues 1–106; it reads ARAVRRRRAR…TRRRRRRARR (106 aa).

As to expression, sperm.

The protein resides in the nucleus. Its subcellular location is the chromosome. This is Protamine from Phorcus turbinatus (Sea snail).